A 297-amino-acid chain; its full sequence is 6-dehydroglucose reductase (297 aa).

Residues W20, R21, and D49 each coordinate NADP(+). Catalysis depends on Y54, which acts as the Proton donor. Residues Y54, K98, H129, and R130 each contribute to the D-glucose site. NADP(+) contacts are provided by S159, N160, Q181, S211, L213, G215, G261, T262, N263, and R267.

This sequence belongs to the aldo/keto reductase family. Homotrimer.

It carries out the reaction D-glucose + NADP(+) = 6-dehydro-D-glucose + NADPH + H(+). Part of the sulfoquinovose monooxygenase (sulfo-SMO) pathway, a D-sulfoquinovose degradation pathway that enables the complete utilization of all carbons within sulfoquinovose (SQ) with concomitant production of inorganic sulfite. Catalyzes the NADP-dependent reduction of 6-dehydro-D-glucose to D-glucose. Cannot use NADH. This chain is 6-dehydroglucose reductase, found in Agrobacterium fabrum (strain C58 / ATCC 33970) (Agrobacterium tumefaciens (strain C58)).